The chain runs to 110 residues: Mite allergen Lep d 5 (110 aa).

Belongs to the mite group 5 allergen family.

The polypeptide is Mite allergen Lep d 5 (Lepidoglyphus destructor (Storage mite)).